The chain runs to 392 residues: N-acetylneuraminate epimerase (392 aa).

Positions 1-35 are cleaved as a signal peptide; it reads MTQIYHQYKKKLSTKVILLSALTLCITFSLPYANA. Kelch repeat units follow at residues 56-100, 102-155, 157-192, 193-238, 241-290, 312-361, and 363-392; these read HLYV…VALS, KLYV…TTLN, TQAL…AVVN, AYFD…TAKK, LILI…LAGA, QQFN…QDKD, and VILL…LHLE. E247 functions as the Proton acceptor in the catalytic mechanism.

The protein belongs to the NanM family. In terms of assembly, homodimer.

Its subcellular location is the periplasm. The catalysed reaction is N-acetyl-alpha-neuraminate = N-acetyl-beta-neuraminate. Its function is as follows. Converts alpha-N-acetylneuranimic acid (Neu5Ac) to the beta-anomer, accelerating the equilibrium between the alpha- and beta-anomers. Probably facilitates sialidase-negative bacteria to compete successfully for limited amounts of extracellular Neu5Ac, which is likely taken up in the beta-anomer. In addition, the rapid removal of sialic acid from solution might be advantageous to the bacterium to damp down host responses. The protein is N-acetylneuraminate epimerase of Yersinia enterocolitica serotype O:8 / biotype 1B (strain NCTC 13174 / 8081).